The chain runs to 737 residues: Phosphoribosylformylglycinamidine synthase subunit PurL (737 aa).

His-50 is an active-site residue. ATP is bound by residues Tyr-53 and Lys-92. Position 94 (Glu-94) interacts with Mg(2+). Residues 95–98 (SHNH) and Arg-117 each bind substrate. His-96 functions as the Proton acceptor in the catalytic mechanism. Asp-118 provides a ligand contact to Mg(2+). Substrate is bound at residue Gln-241. Mg(2+) is bound at residue Asp-269. Residue 313–315 (ESQ) coordinates substrate. Residues Asp-494 and Gly-531 each contribute to the ATP site. Asn-532 is a binding site for Mg(2+). Residue Ser-534 participates in substrate binding.

The protein belongs to the FGAMS family. Monomer. Part of the FGAM synthase complex composed of 1 PurL, 1 PurQ and 2 PurS subunits.

The protein resides in the cytoplasm. It catalyses the reaction N(2)-formyl-N(1)-(5-phospho-beta-D-ribosyl)glycinamide + L-glutamine + ATP + H2O = 2-formamido-N(1)-(5-O-phospho-beta-D-ribosyl)acetamidine + L-glutamate + ADP + phosphate + H(+). It participates in purine metabolism; IMP biosynthesis via de novo pathway; 5-amino-1-(5-phospho-D-ribosyl)imidazole from N(2)-formyl-N(1)-(5-phospho-D-ribosyl)glycinamide: step 1/2. In terms of biological role, part of the phosphoribosylformylglycinamidine synthase complex involved in the purines biosynthetic pathway. Catalyzes the ATP-dependent conversion of formylglycinamide ribonucleotide (FGAR) and glutamine to yield formylglycinamidine ribonucleotide (FGAM) and glutamate. The FGAM synthase complex is composed of three subunits. PurQ produces an ammonia molecule by converting glutamine to glutamate. PurL transfers the ammonia molecule to FGAR to form FGAM in an ATP-dependent manner. PurS interacts with PurQ and PurL and is thought to assist in the transfer of the ammonia molecule from PurQ to PurL. This chain is Phosphoribosylformylglycinamidine synthase subunit PurL, found in Rhodopseudomonas palustris (strain BisA53).